We begin with the raw amino-acid sequence, 1010 residues long: METESEQNSSSTNGSSSSGASSRPQIAQMSLYERQAVQALQALQRQPNAAQYFHQFMLQQQLSNAQLHSLAAVQQATIAASRQASSPNSSTAQQQTATTQASMNLATTSAAQLISRSQSVSSPSATTLTQSVLLGNTTSPPLNQSQAQMYLRPQLGNLLQVNRTLGRNVPLASQLILMPNGAVAAVQQEVPPAQSPGVHADADQVQNLAVRNQQASAQGPQMPGSTQKAIPPGASPVSGLSQTSSQALAVAQASSGASGQSLNLSQAGGGSGNSLPGSMGPGGGGQAPGGLGQLPSSGLTGGSCPRKGTGVVQPLPAAQTVTVSQGSQTEAESAAAKKAEADGSGQQSVGMNLTRTATPAPSQTLISSATYTQIQPHSLIQQQQQIHLQQKQVVIQQQIAIHHQQQFQHRQSQLLHTATHLQLAQQQQQQQQQQQQQQQQQQQQQQGTTLTAPQPPQVPPTQQVPPSQSQQQAQTLVVQPMLQSSPLTLPPEPTSKPPIPIQSKPPVAPIKPPQLGAAKMSATQQPPPHIPVQVVGTRQPGSAQAQALGLAQLAAAVPTPRGITGAVQPGQAHLASSPPSSQAAPGALQECPPALAAGMTLAPVQGTAHVVKGGPTASSPVVAQVPAAFYMQSVHLPGKAQTLAVKRKAESEEERDDLSALASVLPTKASPAAESPKVIEEKNSLGEKAEPVASLNANPPNSDLVALAPTPSAPPPTLALVSRQMGDSKPPQAIVKPQILTHIIEGFVIQEGAEPFPVGCSQFLKETKKPLQAGLPTGLNESQPSGPLGGDSPSVELEKKANLLKCEYCGKYAPAEQFRGSKRFCSMTCAKRYNVSCSHQFRLKRKKMKEFQEASYARVRRRGPRRSSSDIARAKIQGKRHRGQEDSSRGSDNSSYDEALSPTSPGPLSVRAGHGERDLGNTITTPSTPELQGINPVFLSSNPSQWSVEEVYEFIASLQGCQEIAEEFRSQEIDGQALLLLKEEHLMSAMNIKLGPALKICAKINVLKET.

The span at 1–22 shows a compositional bias: low complexity; that stretch reads METESEQNSSSTNGSSSSGASS. Disordered regions lie at residues 1-25, 212-243, 259-312, 444-506, 565-588, and 646-678; these read METE…SRPQ, NQQA…LSQT, GQSL…TGVV, QQQG…SKPP, GAVQ…PGAL, and KRKA…SPKV. Over residues 212 to 228 the composition is skewed to polar residues; it reads NQQASAQGPQMPGSTQK. A compositionally biased stretch (gly residues) spans 279–292; sequence MGPGGGGQAPGGLG. The segment covering 453–463 has biased composition (pro residues); it reads PQPPQVPPTQQ. Over residues 464–480 the composition is skewed to low complexity; sequence VPPSQSQQQAQTLVVQP. Pro residues predominate over residues 488-500; sequence TLPPEPTSKPPIP. Residues 575–587 are compositionally biased toward low complexity; the sequence is ASSPPSSQAAPGA. A Phosphoserine modification is found at Ser651. Lys769 is covalently cross-linked (Glycyl lysine isopeptide (Lys-Gly) (interchain with G-Cter in SUMO2)). The interval 772-794 is disordered; the sequence is QAGLPTGLNESQPSGPLGGDSPS. Residues 797–831 form an FCS-type zinc finger; it reads LEKKANLLKCEYCGKYAPAEQFRGSKRFCSMTCAK. Cys806, Cys809, Cys825, and Cys829 together coordinate Zn(2+). Residues 854–928 form a disordered region; the sequence is ASYARVRRRG…LGNTITTPST (75 aa). Residue Ser904 is modified to Phosphoserine. A Phosphothreonine modification is found at Thr928. Residues 946 to 1010 form the SAM domain; that stretch reads WSVEEVYEFI…CAKINVLKET (65 aa).

Homodimer. Component of a PRC1-like complex. Interacts with the SAM domain of SCMH1 via its SAM domain in vitro. Interacts with RNF2 and CBX7. Interacts with PHC2. Interacts with BMI1. As to expression, highly expressed in testis with lower levels in most other tissues. Expressed in embryonic stem cells.

Its subcellular location is the nucleus. In terms of biological role, component of a Polycomb group (PcG) multiprotein PRC1-like complex, a complex class required to maintain the transcriptionally repressive state of many genes, including Hox genes, throughout development. PcG PRC1 complex acts via chromatin remodeling and modification of histones; it mediates monoubiquitination of histone H2A 'Lys-119', rendering chromatin heritably changed in its expressibility. Required for proper control of cellular levels of GMNN expression. This is Polyhomeotic-like protein 1 from Mus musculus (Mouse).